The sequence spans 159 residues: Transcription elongation factor GreA (159 aa).

A coiled-coil region spans residues 14-76 (IKKLENELEY…QLENMLKNAS (63 aa)).

This sequence belongs to the GreA/GreB family.

Necessary for efficient RNA polymerase transcription elongation past template-encoded arresting sites. The arresting sites in DNA have the property of trapping a certain fraction of elongating RNA polymerases that pass through, resulting in locked ternary complexes. Cleavage of the nascent transcript by cleavage factors such as GreA or GreB allows the resumption of elongation from the new 3'terminus. GreA releases sequences of 2 to 3 nucleotides. The polypeptide is Transcription elongation factor GreA (Clostridium kluyveri (strain NBRC 12016)).